An 80-amino-acid chain; its full sequence is CLAVATA3/ESR (CLE)-related protein 4 (80 aa).

Positions 1–22 (MASFKLWVCLILLLLEFSVHQC) are cleaved as a signal peptide. The segment at 55–80 (SKDGQTVLGTLDSKRLSPGGPDPRHH) is disordered. Residues Pro-72 and Pro-75 each carry the hydroxyproline modification. The O-linked (Ara...) hydroxyproline glycan is linked to Pro-75.

It belongs to the CLV3/ESR signal peptide family. The O-glycosylation (arabinosylation) of the hydroxyproline Pro-75 enhances binding affinity of the CLE4p peptide for its receptor. In terms of tissue distribution, expressed in roots and seedlings.

The protein resides in the secreted. It is found in the extracellular space. In terms of biological role, extracellular signal peptide that regulates cell fate. This is CLAVATA3/ESR (CLE)-related protein 4 from Arabidopsis thaliana (Mouse-ear cress).